The sequence spans 463 residues: Rubisco accumulation factor 1, chloroplastic (463 aa).

A compositionally biased stretch (low complexity) spans 1 to 18 (MLSLSHPHPHPAASTTAP). A chloroplast-targeting transit peptide spans 1–31 (MLSLSHPHPHPAASTTAPRHQRTAPVWHRRR). A disordered region spans residues 1 to 84 (MLSLSHPHPH…PFHPPPSPLP (84 aa)). Basic residues predominate over residues 19–33 (RHQRTAPVWHRRRAS). Positions 43 to 53 (PGGGSTGGRGG) are enriched in gly residues. Residues 83-275 (LPPSLRNLDL…SGRARVELEL (193 aa)) form an N-terminal alpha-helix region. Residues 240–294 (RQSREAIDVQDRVAELERALQVVETESGRARVELELERARRKAAGEEEVDEEGEE) are a coiled coil. The interval 305-450 (VTVVRLRYGE…AEVVIVVRPP (146 aa)) is C-terminal beta sheet.

This sequence belongs to the RAF family. Homotrimer. In terms of tissue distribution, expressed in bundle sheath.

The protein localises to the plastid. It localises to the chloroplast. In terms of biological role, required for assembly or stability of RuBisCO. Acts at a postchaperonin step to fold and/or assemble the large subunit (LS) into RuBisCO. This chain is Rubisco accumulation factor 1, chloroplastic, found in Zea mays (Maize).